A 239-amino-acid polypeptide reads, in one-letter code: Claudin-14 (239 aa).

The Cytoplasmic portion of the chain corresponds to 1-7 (MASTAVQ). Residues 8–28 (LLGFLLSFLGMVGTLITTILP) traverse the membrane as a helical segment. At 29–81 (HWRRTAHVGTNILTAVSYLKGLWMECVWHSTGIYQCQIYRSLLALPRDLQAAR) the chain is on the extracellular side. Residues 82 to 102 (ALMVISCLLSGMACACAVVGM) form a helical membrane-spanning segment. The Cytoplasmic portion of the chain corresponds to 103-115 (KCTRCAKGTPAKT). The chain crosses the membrane as a helical span at residues 116-136 (TFAVLGGALFLLAGLLCMVAV). Topologically, residues 137–162 (SWTTNDVVQNFYNPLLPSGMKFEIGQ) are extracellular. Residues 163-183 (ALYLGFISSSLSLIGGTLLCL) traverse the membrane as a helical segment. Residues 184 to 239 (SCQDEAPYRPYPPQSRAGATTTATAPAYRPPAAYKDNRAPSVTSAAHSGYRLNDYV) are Cytoplasmic-facing.

The protein belongs to the claudin family. As to expression, expressed in all sensory epithelia of the inner ear vestibular organs, as well as in liver and kidney.

The protein localises to the cell junction. The protein resides in the tight junction. Its subcellular location is the cell membrane. Its function is as follows. Plays a major role in tight junction-specific obliteration of the intercellular space, through calcium-independent cell-adhesion activity. This is Claudin-14 (Cldn14) from Mus musculus (Mouse).